The chain runs to 376 residues: Chaperone protein DnaJ 2 (376 aa).

The J domain maps to aspartate 5–glycine 70. The CR-type zinc-finger motif lies at glycine 135 to glutamine 213. Zn(2+)-binding residues include cysteine 148, cysteine 151, cysteine 165, cysteine 168, cysteine 187, cysteine 190, cysteine 201, and cysteine 204. 4 CXXCXGXG motif repeats span residues cysteine 148–glycine 155, cysteine 165–glycine 172, cysteine 187–glycine 194, and cysteine 201–glycine 208.

Belongs to the DnaJ family. As to quaternary structure, homodimer. Zn(2+) is required as a cofactor.

The protein localises to the cytoplasm. Functionally, participates actively in the response to hyperosmotic and heat shock by preventing the aggregation of stress-denatured proteins and by disaggregating proteins, also in an autonomous, DnaK-independent fashion. Unfolded proteins bind initially to DnaJ; upon interaction with the DnaJ-bound protein, DnaK hydrolyzes its bound ATP, resulting in the formation of a stable complex. GrpE releases ADP from DnaK; ATP binding to DnaK triggers the release of the substrate protein, thus completing the reaction cycle. Several rounds of ATP-dependent interactions between DnaJ, DnaK and GrpE are required for fully efficient folding. Also involved, together with DnaK and GrpE, in the DNA replication of plasmids through activation of initiation proteins. The polypeptide is Chaperone protein DnaJ 2 (Aromatoleum aromaticum (strain DSM 19018 / LMG 30748 / EbN1) (Azoarcus sp. (strain EbN1))).